Reading from the N-terminus, the 86-residue chain is Conidiation-specific protein 10 (86 aa).

Over residues 1–11 (MAGTGNDNPGN) the composition is skewed to polar residues. Positions 1–86 (MAGTGNDNPG…SGGTGADDDE (86 aa)) are disordered. Low complexity predominate over residues 49–58 (SKGGKASSGS). The span at 62 to 71 (GSEKAREAGR) shows a compositional bias: basic and acidic residues. Residues 75 to 86 (KASGGTGADDDE) are compositionally biased toward gly residues.

The protein belongs to the con-10 family.

The sequence is that of Conidiation-specific protein 10 (con-10) from Neurospora crassa (strain ATCC 24698 / 74-OR23-1A / CBS 708.71 / DSM 1257 / FGSC 987).